The primary structure comprises 291 residues: ATP synthase gamma chain (291 aa).

Belongs to the ATPase gamma chain family. In terms of assembly, F-type ATPases have 2 components, CF(1) - the catalytic core - and CF(0) - the membrane proton channel. CF(1) has five subunits: alpha(3), beta(3), gamma(1), delta(1), epsilon(1). CF(0) has three main subunits: a, b and c.

Its subcellular location is the cell inner membrane. Functionally, produces ATP from ADP in the presence of a proton gradient across the membrane. The gamma chain is believed to be important in regulating ATPase activity and the flow of protons through the CF(0) complex. The chain is ATP synthase gamma chain from Methylibium petroleiphilum (strain ATCC BAA-1232 / LMG 22953 / PM1).